A 36-amino-acid chain; its full sequence is Potassium channel toxin alpha-KTx 1.9 (36 aa).

The protein belongs to the short scorpion toxin superfamily. Potassium channel inhibitor family. Alpha-KTx 01 subfamily. As to expression, expressed by the venom gland.

It localises to the secreted. In terms of biological role, potent selective inhibitor of Kv1/KCNA voltage-gated potassium channels. The chain is Potassium channel toxin alpha-KTx 1.9 from Centruroides limbatus (Bark scorpion).